The following is a 302-amino-acid chain: Putative S-adenosyl-L-methionine-dependent methyltransferase MUL_2961 (302 aa).

Residues Asp128 and 157–158 (DL) contribute to the S-adenosyl-L-methionine site.

This sequence belongs to the UPF0677 family.

Exhibits S-adenosyl-L-methionine-dependent methyltransferase activity. In Mycobacterium ulcerans (strain Agy99), this protein is Putative S-adenosyl-L-methionine-dependent methyltransferase MUL_2961.